The chain runs to 91 residues: Probable Fe(2+)-trafficking protein (91 aa).

The protein belongs to the Fe(2+)-trafficking protein family.

Its function is as follows. Could be a mediator in iron transactions between iron acquisition and iron-requiring processes, such as synthesis and/or repair of Fe-S clusters in biosynthetic enzymes. The chain is Probable Fe(2+)-trafficking protein from Cupriavidus metallidurans (strain ATCC 43123 / DSM 2839 / NBRC 102507 / CH34) (Ralstonia metallidurans).